A 297-amino-acid polypeptide reads, in one-letter code: Small ribosomal subunit protein uS2 (297 aa).

Residues 266 to 297 (GASWDAAEPSDWAATPAAAGQEWAASGATEQW) form a disordered region. Over residues 282-297 (AAAGQEWAASGATEQW) the composition is skewed to low complexity.

The protein belongs to the universal ribosomal protein uS2 family. In terms of assembly, component of the small ribosomal subunit. Mature ribosomes consist of a small (40S) and a large (60S) subunit. The 40S subunit contains about 33 different proteins and 1 molecule of RNA (18S). The 60S subunit contains about 49 different proteins and 3 molecules of RNA (25S, 5.8S and 5S). Interacts with rps21.

It localises to the cytoplasm. Functionally, required for the assembly and/or stability of the 40S ribosomal subunit. Required for the processing of the 20S rRNA-precursor to mature 18S rRNA in a late step of the maturation of 40S ribosomal subunits. This Sclerotinia sclerotiorum (strain ATCC 18683 / 1980 / Ss-1) (White mold) protein is Small ribosomal subunit protein uS2 (rps0).